A 323-amino-acid chain; its full sequence is Mas-related G-protein coupled receptor member X1 (323 aa).

Residues 1–30 (MDPTISSLSTESTTLNKTGHPSCRPILTLS) are Extracellular-facing. N16 carries N-linked (GlcNAc...) asparagine glycosylation. A helical transmembrane segment spans residues 31 to 51 (FLVPIITLLGLAGNTIVLWLL). The Cytoplasmic portion of the chain corresponds to 52-59 (GFRMRRKA). A helical transmembrane segment spans residues 60–80 (ISVYVLNLSLADSFFLCCHFI). Residues 81-100 (DSLMRIMNFYGIYAHKLSKE) are Extracellular-facing. The helical transmembrane segment at 101 to 121 (ILGNAAIIPYISGLSILSAIS) threads the bilayer. Topologically, residues 122-143 (TERCLSVLWPIWYHCHRPRNMS) are cytoplasmic. The helical transmembrane segment at 144–164 (AIICVLIWVLSFLMGILDWFF) threads the bilayer. Residues 165–180 (SGFLGETHHHLWKNVD) are Extracellular-facing. A helical transmembrane segment spans residues 181–201 (FIVTAFLIFLFMLLFGSSLAL). The Cytoplasmic segment spans residues 202-226 (LVRILCGSRRKPLSRLYVTISLTVM). A helical membrane pass occupies residues 227–247 (VYLICGLPLGLYLFLLYWFGI). The Extracellular segment spans residues 248-258 (HLHYPFCHIYQ). Residues 259–279 (VTVLLSCVNSSANPIIYFLVG) form a helical membrane-spanning segment. At 280 to 323 (SFRHRKKHRSLKMVLKRALEETPEEDEYTDSHVQKPTEISERRC) the chain is on the cytoplasmic side.

It belongs to the G-protein coupled receptor 1 family. Mas subfamily. In terms of tissue distribution, uniquely localized in a subset of small dorsal root and trigeminal sensory neurons. Associated preferentially with IB4 class of small-diameter somatosensory afferents (also known as nociceptors).

It is found in the cell membrane. In terms of biological role, orphan receptor activated by neuropeptides terminating in Arg-Phe or Arg-Phe-amide. Mediates its action by association with G proteins that activate a phosphatidylinositol-calcium second messenger system. Its effect is mediated by G(q) and G(11) proteins. May regulate the function of nociceptive neurons by modulation of pain perception. The sequence is that of Mas-related G-protein coupled receptor member X1 (Mrgprx1) from Rattus norvegicus (Rat).